We begin with the raw amino-acid sequence, 1391 residues long: Axoneme-associated protein mst101(2) (1391 aa).

2 disordered regions span residues 170–213 (ECNQ…GKKL) and 280–300 (SSEP…EKEL). The segment covering 184 to 201 (TKKGKTKGKSGGGNKKRS) has biased composition (basic residues). Residues 291 to 300 (KNDEKKEKEL) show a composition bias toward basic and acidic residues. 59 tandem repeats follow at residues 332 to 347 (KKKC…EEAE), 348 to 363 (KKKC…EEDE), 364 to 379 (KKAC…EADE), 380 to 395 (KKKC…KAAE), 396 to 411 (KKKC…EAAE), 412 to 427 (KKKC…EAAE), 428 to 443 (RKKC…KAAE), 444 to 459 (KKKC…EAAE), 460 to 475 (RKKC…KAAE), 476 to 491 (KKKC…EVAE), 492 to 507 (RKKC…KAEI), 508 to 523 (KKKC…ETAE), 524 to 539 (KKKC…EAAE), 540 to 555 (KKKC…EAAE), 556 to 571 (KKKC…EAAE), 572 to 587 (KKKC…EAAE), 588 to 603 (KKKC…EVAE), 604 to 619 (RKKC…KAAE), 620 to 635 (KKKC…EAAE), 636 to 651 (REKC…KAAE), 652 to 667 (KKKC…ETAE), 668 to 683 (KKKC…EAAE), 684 to 699 (KKKC…EAAE), 700 to 715 (KKKC…EAAE), 716 to 731 (RKKC…KAAE), 732 to 747 (KKKC…AGEK), 748 to 763 (NKLK…ALKE), 764 to 779 (KKKC…AEKK), 780 to 795 (KCKE…AEKK), 796 to 811 (KCEK…AEKK), 812 to 827 (KCEK…AEKK), 828 to 843 (KCEK…AEKK), 844 to 859 (KCEK…AEKK), 860 to 875 (KCEK…AEKK), 876 to 891 (KCEK…AEKK), 892 to 907 (KCAE…AEKK), 908 to 923 (KCEE…AERK), 924 to 939 (KCEE…AEKK), 940 to 955 (KCKK…GEKN), 956 to 971 (KLKK…CKKL), 972 to 987 (GKKS…CAEA), 988 to 1003 (AKKE…CEER), 1004 to 1019 (AKKQ…CEER), 1020 to 1035 (AKKL…CEER), 1036 to 1051 (AKKL…CEER), 1052 to 1067 (AKKL…CEER), 1068 to 1083 (AKKL…CEER), 1084 to 1099 (AKKE…CEER), 1100 to 1115 (AKKL…CEER), 1116 to 1131 (AKKE…CEEA), 1132 to 1147 (AKRE…CAEA), 1148 to 1163 (AKKE…CAEA), 1164 to 1179 (AKKE…CAEA), 1180 to 1195 (AKRE…CADL), 1196 to 1211 (AKKE…CEEA), 1212 to 1227 (AKKE…CAKA), 1228 to 1243 (AKKE…CAEA), 1244 to 1259 (AKKE…CAEA), and 1260 to 1275 (AKKE…CEKA). A 59 X 16 AA approximate tandem repeats of [KR]-K-X-C-X-X-X-A-K-X-X-K-X-X-X-E region spans residues 332 to 1275 (KKKCKDLGRK…AEKKRKCEKA (944 aa)). Residues 370-429 (LAKKKKEADEKKKCEEAANKEKKAAEKKKCEKAAKERKEAAEKKKCEEAAKKEKEAAERK) are disordered. A disordered region spans residues 516–577 (KKEKETAEKK…EAAEKKKCEK (62 aa)). Residues 517–577 (KEKETAEKKK…EAAEKKKCEK (61 aa)) are compositionally biased toward basic and acidic residues. Positions 729 to 765 (AAEKKKCKKLAKKKKAGEKNKLKKGNKKGKKALKEKK) are enriched in basic residues. 3 disordered regions span residues 729–881 (AAEK…EKAA), 900–922 (EKEL…VAER), and 934–1013 (KAAE…AAEK). Over residues 766–881 (KCRELAKKKA…AEKKKCEKAA (116 aa)) the composition is skewed to basic and acidic residues. 2 stretches are compositionally biased toward basic residues: residues 934 to 949 (KAAE…KKEK) and 956 to 976 (KLKK…KKSK). Residues 977–1013 (RAAEKKKCAEAAKKEKEAATKKKCEERAKKQKEAAEK) are compositionally biased toward basic and acidic residues. Disordered stretches follow at residues 1076–1095 (EKKQ…EKKQ) and 1104–1212 (KEAA…EEAA). The span at 1353 to 1370 (KKEKEAAEKKKRCKDLAK) shows a compositional bias: basic and acidic residues. Residues 1353 to 1391 (KKEKEAAEKKKRCKDLAKNKKKGHKKKGRNENRKKRTDC) are disordered. The segment covering 1371 to 1391 (NKKKGHKKKGRNENRKKRTDC) has biased composition (basic residues).

In terms of tissue distribution, testis. Primary spermatocytes and early spermatids.

The protein resides in the cytoplasm. Possible structural role in the sperm tail. In Drosophila hydei (Fruit fly), this protein is Axoneme-associated protein mst101(2) (mst101(2)).